Here is a 207-residue protein sequence, read N- to C-terminus: Large ribosomal subunit protein uL4 (207 aa).

The interval 49-78 (HAVKNRSAVSGGGRKPWRQKGTGRARQGSI) is disordered.

Belongs to the universal ribosomal protein uL4 family. As to quaternary structure, part of the 50S ribosomal subunit.

Functionally, one of the primary rRNA binding proteins, this protein initially binds near the 5'-end of the 23S rRNA. It is important during the early stages of 50S assembly. It makes multiple contacts with different domains of the 23S rRNA in the assembled 50S subunit and ribosome. In terms of biological role, forms part of the polypeptide exit tunnel. This Streptococcus pyogenes serotype M49 (strain NZ131) protein is Large ribosomal subunit protein uL4.